The primary structure comprises 294 residues: Lipoyl synthase (294 aa).

[4Fe-4S] cluster contacts are provided by cysteine 35, cysteine 40, cysteine 46, cysteine 61, cysteine 65, cysteine 68, and serine 275. The Radical SAM core domain maps to 46-264; it reads CWGGGTATVM…REAGLGLGFR (219 aa).

It belongs to the radical SAM superfamily. Lipoyl synthase family. [4Fe-4S] cluster is required as a cofactor.

It is found in the cytoplasm. The enzyme catalyses [[Fe-S] cluster scaffold protein carrying a second [4Fe-4S](2+) cluster] + N(6)-octanoyl-L-lysyl-[protein] + 2 oxidized [2Fe-2S]-[ferredoxin] + 2 S-adenosyl-L-methionine + 4 H(+) = [[Fe-S] cluster scaffold protein] + N(6)-[(R)-dihydrolipoyl]-L-lysyl-[protein] + 4 Fe(3+) + 2 hydrogen sulfide + 2 5'-deoxyadenosine + 2 L-methionine + 2 reduced [2Fe-2S]-[ferredoxin]. It functions in the pathway protein modification; protein lipoylation via endogenous pathway; protein N(6)-(lipoyl)lysine from octanoyl-[acyl-carrier-protein]: step 2/2. Functionally, catalyzes the radical-mediated insertion of two sulfur atoms into the C-6 and C-8 positions of the octanoyl moiety bound to the lipoyl domains of lipoate-dependent enzymes, thereby converting the octanoylated domains into lipoylated derivatives. This Anaeromyxobacter sp. (strain Fw109-5) protein is Lipoyl synthase.